A 427-amino-acid chain; its full sequence is Serine--tRNA ligase (427 aa).

L-serine is bound at residue 231–233 (TAE). 262–264 (RSE) serves as a coordination point for ATP. Residue glutamate 285 participates in L-serine binding. Position 349–352 (349–352 (EISS)) interacts with ATP. Serine 385 is an L-serine binding site.

Belongs to the class-II aminoacyl-tRNA synthetase family. Type-1 seryl-tRNA synthetase subfamily. In terms of assembly, homodimer. The tRNA molecule binds across the dimer.

Its subcellular location is the cytoplasm. It catalyses the reaction tRNA(Ser) + L-serine + ATP = L-seryl-tRNA(Ser) + AMP + diphosphate + H(+). It carries out the reaction tRNA(Sec) + L-serine + ATP = L-seryl-tRNA(Sec) + AMP + diphosphate + H(+). It functions in the pathway aminoacyl-tRNA biosynthesis; selenocysteinyl-tRNA(Sec) biosynthesis; L-seryl-tRNA(Sec) from L-serine and tRNA(Sec): step 1/1. Its function is as follows. Catalyzes the attachment of serine to tRNA(Ser). Is also able to aminoacylate tRNA(Sec) with serine, to form the misacylated tRNA L-seryl-tRNA(Sec), which will be further converted into selenocysteinyl-tRNA(Sec). This is Serine--tRNA ligase from Brucella abortus (strain S19).